A 460-amino-acid polypeptide reads, in one-letter code: Methylenetetrahydrofolate--tRNA-(uracil-5-)-methyltransferase TrmFO (460 aa).

Residue 15 to 20 (GAGLAG) coordinates FAD.

This sequence belongs to the MnmG family. TrmFO subfamily. It depends on FAD as a cofactor.

The protein localises to the cytoplasm. It carries out the reaction uridine(54) in tRNA + (6R)-5,10-methylene-5,6,7,8-tetrahydrofolate + NADH + H(+) = 5-methyluridine(54) in tRNA + (6S)-5,6,7,8-tetrahydrofolate + NAD(+). The catalysed reaction is uridine(54) in tRNA + (6R)-5,10-methylene-5,6,7,8-tetrahydrofolate + NADPH + H(+) = 5-methyluridine(54) in tRNA + (6S)-5,6,7,8-tetrahydrofolate + NADP(+). Functionally, catalyzes the folate-dependent formation of 5-methyl-uridine at position 54 (M-5-U54) in all tRNAs. The polypeptide is Methylenetetrahydrofolate--tRNA-(uracil-5-)-methyltransferase TrmFO (Synechococcus sp. (strain CC9902)).